Reading from the N-terminus, the 315-residue chain is Transaldolase (315 aa).

Lysine 125 functions as the Schiff-base intermediate with substrate in the catalytic mechanism.

Belongs to the transaldolase family. Type 1 subfamily. Homodimer.

The protein localises to the cytoplasm. It carries out the reaction D-sedoheptulose 7-phosphate + D-glyceraldehyde 3-phosphate = D-erythrose 4-phosphate + beta-D-fructose 6-phosphate. It functions in the pathway carbohydrate degradation; pentose phosphate pathway; D-glyceraldehyde 3-phosphate and beta-D-fructose 6-phosphate from D-ribose 5-phosphate and D-xylulose 5-phosphate (non-oxidative stage): step 2/3. Transaldolase is important for the balance of metabolites in the pentose-phosphate pathway. The protein is Transaldolase of Leptothrix cholodnii (strain ATCC 51168 / LMG 8142 / SP-6) (Leptothrix discophora (strain SP-6)).